A 268-amino-acid polypeptide reads, in one-letter code: Mitochondrial distribution and morphology protein 12 (268 aa).

In terms of domain architecture, SMP-LTD spans 1 to 266 (MSIDLEWCKL…FPNFHTIVMA (266 aa)). Positions 66–136 (EDDEEGSDRG…PPPAENPHPN (71 aa)) are disordered. Residues 102 to 111 (PATNVTSSLD) are compositionally biased toward polar residues. A compositionally biased stretch (basic and acidic residues) spans 112-121 (TRSDQPDDQK).

It belongs to the MDM12 family. Component of the ER-mitochondria encounter structure (ERMES) or MDM complex, composed of MMM1, MDM10, MDM12 and MDM34. An MMM1 homodimer associates with one molecule of MDM12 on each side in a pairwise head-to-tail manner, and the SMP-LTD domains of MMM1 and MDM12 generate a continuous hydrophobic tunnel for phospholipid trafficking.

The protein resides in the mitochondrion outer membrane. It localises to the endoplasmic reticulum membrane. Its function is as follows. Component of the ERMES/MDM complex, which serves as a molecular tether to connect the endoplasmic reticulum (ER) and mitochondria. Components of this complex are involved in the control of mitochondrial shape and protein biogenesis, and function in nonvesicular lipid trafficking between the ER and mitochondria. MDM12 is required for the interaction of the ER-resident membrane protein MMM1 and the outer mitochondrial membrane-resident beta-barrel protein MDM10. The MDM12-MMM1 subcomplex functions in the major beta-barrel assembly pathway that is responsible for biogenesis of all mitochondrial outer membrane beta-barrel proteins, and acts in a late step after the SAM complex. The MDM10-MDM12-MMM1 subcomplex further acts in the TOM40-specific pathway after the action of the MDM12-MMM1 complex. Essential for establishing and maintaining the structure of mitochondria and maintenance of mtDNA nucleoids. This chain is Mitochondrial distribution and morphology protein 12, found in Laccaria bicolor (strain S238N-H82 / ATCC MYA-4686) (Bicoloured deceiver).